Consider the following 1070-residue polypeptide: Carbamoyl phosphate synthase large chain (1070 aa).

Residues 1 to 401 (MPKRDDIKTI…ALLKAVRSLE (401 aa)) are carboxyphosphate synthetic domain. Residues R129, R169, G175, G176, K208, I210, E215, G241, I242, H243, Q284, and E298 each coordinate ATP. Residues 133-327 (RDLMNELGEP…IAKLAAKIAV (195 aa)) enclose the ATP-grasp 1 domain. Mg(2+)-binding residues include Q284, E298, and N300. Residues Q284, E298, and N300 each contribute to the Mn(2+) site. An oligomerization domain region spans residues 402-546 (VGADHLLLEE…YSTYEEENES (145 aa)). The tract at residues 547 to 929 (TRSAKESVIV…ALYKGFVASG (383 aa)) is carbamoyl phosphate synthetic domain. In terms of domain architecture, ATP-grasp 2 spans 671 to 861 (EKALEILQIP…MANVATRVIL (191 aa)). ATP-binding residues include R707, R746, V748, E752, G777, V778, H779, S780, Q820, and E832. Positions 820, 832, and 834 each coordinate Mg(2+). Mn(2+) is bound by residues Q820, E832, and N834. Residues 930-1070 (TTMHDYGTVL…SEVKQPKVRV (141 aa)) form the MGS-like domain. An allosteric domain region spans residues 930–1070 (TTMHDYGTVL…SEVKQPKVRV (141 aa)).

This sequence belongs to the CarB family. As to quaternary structure, composed of two chains; the small (or glutamine) chain promotes the hydrolysis of glutamine to ammonia, which is used by the large (or ammonia) chain to synthesize carbamoyl phosphate. Tetramer of heterodimers (alpha,beta)4. It depends on Mg(2+) as a cofactor. Requires Mn(2+) as cofactor.

It carries out the reaction hydrogencarbonate + L-glutamine + 2 ATP + H2O = carbamoyl phosphate + L-glutamate + 2 ADP + phosphate + 2 H(+). The enzyme catalyses hydrogencarbonate + NH4(+) + 2 ATP = carbamoyl phosphate + 2 ADP + phosphate + 2 H(+). Its pathway is amino-acid biosynthesis; L-arginine biosynthesis; carbamoyl phosphate from bicarbonate: step 1/1. It functions in the pathway pyrimidine metabolism; UMP biosynthesis via de novo pathway; (S)-dihydroorotate from bicarbonate: step 1/3. Large subunit of the glutamine-dependent carbamoyl phosphate synthetase (CPSase). CPSase catalyzes the formation of carbamoyl phosphate from the ammonia moiety of glutamine, carbonate, and phosphate donated by ATP, constituting the first step of 2 biosynthetic pathways, one leading to arginine and/or urea and the other to pyrimidine nucleotides. The large subunit (synthetase) binds the substrates ammonia (free or transferred from glutamine from the small subunit), hydrogencarbonate and ATP and carries out an ATP-coupled ligase reaction, activating hydrogencarbonate by forming carboxy phosphate which reacts with ammonia to form carbamoyl phosphate. The sequence is that of Carbamoyl phosphate synthase large chain from Listeria welshimeri serovar 6b (strain ATCC 35897 / DSM 20650 / CCUG 15529 / CIP 8149 / NCTC 11857 / SLCC 5334 / V8).